The chain runs to 202 residues: Putative 3-methyladenine DNA glycosylase (202 aa).

The protein belongs to the DNA glycosylase MPG family.

The chain is Putative 3-methyladenine DNA glycosylase from Staphylococcus aureus (strain Mu3 / ATCC 700698).